The following is a 146-amino-acid chain: Ribonuclease H (146 aa).

The RNase H type-1 domain occupies 1–136 (MKHIEIYTDG…CDTLAREAAL (136 aa)). The Mg(2+) site is built by Asp-9, Glu-47, Asp-69, and Asp-128.

Belongs to the RNase H family. Monomer. Mg(2+) serves as cofactor.

The protein resides in the cytoplasm. The enzyme catalyses Endonucleolytic cleavage to 5'-phosphomonoester.. Its function is as follows. Endonuclease that specifically degrades the RNA of RNA-DNA hybrids. In Campylobacter jejuni subsp. jejuni serotype O:23/36 (strain 81-176), this protein is Ribonuclease H.